A 390-amino-acid chain; its full sequence is Serpin B4 (390 aa).

Position 1 is an N-acetylmethionine (Met-1).

Belongs to the serpin family. Ov-serpin subfamily. In terms of tissue distribution, squamous cells.

The protein resides in the cytoplasm. Its function is as follows. May act as a protease inhibitor to modulate the host immune response against tumor cells. The protein is Serpin B4 (SERPINB4) of Homo sapiens (Human).